The chain runs to 214 residues: RNA pyrophosphohydrolase (214 aa).

In terms of domain architecture, Nudix hydrolase spans 6–149 (GFRPNVGIIL…KRDVYQLALT (144 aa)). Residues 38–59 (GGIKYGETPMQAMYRELHEETG) carry the Nudix box motif.

This sequence belongs to the Nudix hydrolase family. RppH subfamily. Requires a divalent metal cation as cofactor.

In terms of biological role, accelerates the degradation of transcripts by removing pyrophosphate from the 5'-end of triphosphorylated RNA, leading to a more labile monophosphorylated state that can stimulate subsequent ribonuclease cleavage. The protein is RNA pyrophosphohydrolase of Burkholderia cenocepacia (strain HI2424).